Reading from the N-terminus, the 414-residue chain is Phosphopentomutase (414 aa).

Asp-10, Asp-309, His-314, Asp-350, His-351, and His-362 together coordinate Mn(2+).

It belongs to the phosphopentomutase family. It depends on Mn(2+) as a cofactor.

The protein resides in the cytoplasm. It carries out the reaction 2-deoxy-alpha-D-ribose 1-phosphate = 2-deoxy-D-ribose 5-phosphate. The enzyme catalyses alpha-D-ribose 1-phosphate = D-ribose 5-phosphate. The protein operates within carbohydrate degradation; 2-deoxy-D-ribose 1-phosphate degradation; D-glyceraldehyde 3-phosphate and acetaldehyde from 2-deoxy-alpha-D-ribose 1-phosphate: step 1/2. In terms of biological role, isomerase that catalyzes the conversion of deoxy-ribose 1-phosphate (dRib-1-P) and ribose 1-phosphate (Rib-1-P) to deoxy-ribose 5-phosphate (dRib-5-P) and ribose 5-phosphate (Rib-5-P), respectively. The sequence is that of Phosphopentomutase from Hahella chejuensis (strain KCTC 2396).